We begin with the raw amino-acid sequence, 507 residues long: ATP synthase subunit alpha, mitochondrial (507 aa).

171-178 contributes to the ATP binding site; it reads GDRQTGKT.

This sequence belongs to the ATPase alpha/beta chains family. In terms of assembly, F-type ATPases have 2 components, CF(1) - the catalytic core - and CF(0) - the membrane proton channel. CF(1) has five subunits: alpha(3), beta(3), gamma(1), delta(1), epsilon(1). CF(0) has three main subunits: a, b and c.

It is found in the mitochondrion. The protein localises to the mitochondrion inner membrane. Functionally, mitochondrial membrane ATP synthase (F(1)F(0) ATP synthase or Complex V) produces ATP from ADP in the presence of a proton gradient across the membrane which is generated by electron transport complexes of the respiratory chain. F-type ATPases consist of two structural domains, F(1) - containing the extramembraneous catalytic core, and F(0) - containing the membrane proton channel, linked together by a central stalk and a peripheral stalk. During catalysis, ATP synthesis in the catalytic domain of F(1) is coupled via a rotary mechanism of the central stalk subunits to proton translocation. Subunits alpha and beta form the catalytic core in F(1). Rotation of the central stalk against the surrounding alpha(3)beta(3) subunits leads to hydrolysis of ATP in three separate catalytic sites on the beta subunits. Subunit alpha does not bear the catalytic high-affinity ATP-binding sites. In Brassica napus (Rape), this protein is ATP synthase subunit alpha, mitochondrial (ATPA).